Consider the following 286-residue polypeptide: Pantothenate synthetase (286 aa).

ATP is bound at residue 31–38 (MGALHDGH). The active-site Proton donor is the histidine 38. Glutamine 62 serves as a coordination point for (R)-pantoate. A beta-alanine-binding site is contributed by glutamine 62. An ATP-binding site is contributed by 148–151 (GKKD). Glutamine 154 serves as a coordination point for (R)-pantoate. Residues valine 177 and 185–188 (KSSR) contribute to the ATP site.

The protein belongs to the pantothenate synthetase family. In terms of assembly, homodimer.

It is found in the cytoplasm. The enzyme catalyses (R)-pantoate + beta-alanine + ATP = (R)-pantothenate + AMP + diphosphate + H(+). It participates in cofactor biosynthesis; (R)-pantothenate biosynthesis; (R)-pantothenate from (R)-pantoate and beta-alanine: step 1/1. Catalyzes the condensation of pantoate with beta-alanine in an ATP-dependent reaction via a pantoyl-adenylate intermediate. This is Pantothenate synthetase from Staphylococcus epidermidis (strain ATCC 35984 / DSM 28319 / BCRC 17069 / CCUG 31568 / BM 3577 / RP62A).